Reading from the N-terminus, the 1018-residue chain is Fibronectin-binding protein A (1018 aa).

Positions 1–36 (MKNNLRYGIRKHKLGAASVFLGTMIVVGMGQDKEAA) are cleaved as a signal peptide. A YSIRK-G/S signaling motif motif is present at residues 7 to 18 (YGIRKHKLGAAS). The tract at residues 37-511 (ASEQKTTTVE…SNKANGNEKN (475 aa)) is ligand-binding A region. Disordered regions lie at residues 38 to 61 (SEQKTTTVEENGNSATDNKTSETQ) and 78 to 195 (ATVT…ETGT). Polar residues-rich tracts occupy residues 39–61 (EQKTTTVEENGNSATDNKTSETQ) and 78–92 (ATVTEQPSNATQVTT). Positions 112–126 (TVKEEVVKEEAKPQV) are enriched in basic and acidic residues. Polar residues predominate over residues 129–139 (TTQSQDNSGDQ). Residues 194 to 511 (GTDVTSKVTV…SNKANGNEKN (318 aa)) form a fibrinogen/elastin/tropoelastin-binding region. Positions 512–872 (GPIIQNNKFE…EGQQTIEEDT (361 aa)) are fibronectin-binding. A B-1 repeat occupies 545–574 (EEYDSSTLDIDYHTAIDGGGGYVDGYIETI). A 2 X approximate tandem repeats region spans residues 545 to 604 (EEYDSSTLDIDYHTAIDGGGGYVDGYIETIEETDSSAIDIDYHTAVDSEAGHVGGYTESS). The stretch at 575 to 604 (EETDSSAIDIDYHTAVDSEAGHVGGYTESS) is one B-2 repeat. Disordered stretches follow at residues 595 to 622 (GHVGGYTESSEESNPIDFEESTHENSKH), 740 to 813 (LGYE…DIDF), and 827 to 997 (EIIE…GMLF). Residues 745 to 782 (GQNSGNQSFEEDTEEDKPKYEQGGNIVDIDFDSVPQIH) form a D-1 repeat. The interval 745–878 (GQNSGNQSFE…EEDTTPPIVP (134 aa)) is 4 X approximate tandem repeats, D-3 repeat has more fibronectin-binding activity. The D-2 repeat unit spans residues 783–820 (GQNKGNQSFEEDTEKDKPKYEHGGNIIDIDFDSVPHIH). Residues 821-859 (GFNKHTEIIEEDTNKDKPSYQFGGHNSVDFEEDTLPKVS) form a D-3 repeat. Over residues 827–838 (EIIEEDTNKDKP) the composition is skewed to basic and acidic residues. Residues 860 to 878 (GQNEGQQTIEEDTTPPIVP) form a D-4; truncated repeat. Over residues 875–938 (PIVPPTPPTP…PAEPGKPVPP (64 aa)) the composition is skewed to pro residues. WR repeat units lie at residues 879-892 (PTPPTPEVPSEPET), 893-906 (PTPPTPEVPSEPET), 907-920 (PTPPTPEVPSEPET), 921-934 (PTPPTPEVPAEPGK), and 935-948 (PVPPAKEEPKKPSK). A 5 X tandem repeats, Pro-rich (WR) region spans residues 879-948 (PTPPTPEVPS…AKEEPKKPSK (70 aa)). Positions 982–986 (LPETG) match the LPXTG sorting signal motif. Threonine 985 bears the Pentaglycyl murein peptidoglycan amidated threonine mark. Positions 986–1018 (GGEESTNKGMLFGGLFSILGLALLRRNKKNHKA) are cleaved as a propeptide — removed by sortase.

Its subcellular location is the secreted. The protein localises to the cell wall. Functionally, possesses multiple, substituting fibronectin (Fn) binding regions, each capable of conferring adherence to both soluble and immobilized forms of Fn. This confers to S.aureus the ability to invade endothelial cells both in vivo and in vitro, without requiring additional factors, although in a slow and inefficient way through actin rearrangements in host cells. This invasion process is mediated by integrin alpha-5/beta-1. Promotes bacterial attachment to both soluble and immobilized forms of fibrinogen (Fg) by means of a unique binding site localized within the 17 C-terminal residues of the gamma-chain of human Fg. Both plasma proteins (Fn and Fg) function as a bridge between bacterium and host cell. Promotes attachment to immobilized elastin peptides in a dose-dependent and saturable manner. Promotes attachment to both full-length and segments of immobilized human tropoelastin at multiple sites in a dose and pH-dependent manner. Promotes adherence to and aggregation of activated platelets independently of other S.aureus surface molecules. Is a critical mediator implicated in the induction of experimental endocarditis in rats with catheter-induced aortic vegetations, promoting both colonization and persistence of the bacterium into the host. The sequence is that of Fibronectin-binding protein A (fnbA) from Staphylococcus aureus (strain NCTC 8325 / PS 47).